The chain runs to 880 residues: Pentatricopeptide repeat-containing protein At3g07290, mitochondrial (880 aa).

A mitochondrion-targeting transit peptide spans 1-89 (MLLIHIRSTR…RSDNDICVRF (89 aa)). PPR repeat units lie at residues 159–193 (NYPC…GFVV), 194–228 (GMID…GFVL), 229–259 (DSHI…MSKE), 265–299 (NSVS…GCQP), 300–334 (STRT…GCKP), 335–369 (NVHT…RIFP), 370–404 (SVIT…ACKP), 405–439 (NVRT…GLSP), 440–474 (DIVS…DIEP), 475–509 (DCLT…GISL), 510–544 (DEVT…RILT), 545–579 (TPHS…GLVP), 580–614 (SVVT…GCLP), 615–649 (NVYP…GVSP), 650–684 (NHVT…GYEL), 685–721 (NDRI…ETDP), 738–768 (ISGL…VLER), 772–806 (LEKA…GFVP), and 807–842 (SFKS…GVVE).

It belongs to the PPR family. P subfamily.

It localises to the mitochondrion. This is Pentatricopeptide repeat-containing protein At3g07290, mitochondrial from Arabidopsis thaliana (Mouse-ear cress).